Reading from the N-terminus, the 557-residue chain is Dihydroxy-acid dehydratase (557 aa).

Asp78 is a Mg(2+) binding site. Cys119 contacts [2Fe-2S] cluster. Mg(2+)-binding residues include Asp120 and Lys121. Residue Lys121 is modified to N6-carboxylysine. Position 192 (Cys192) interacts with [2Fe-2S] cluster. Residue Glu442 participates in Mg(2+) binding. The Proton acceptor role is filled by Ser468.

It belongs to the IlvD/Edd family. Homodimer. It depends on [2Fe-2S] cluster as a cofactor. The cofactor is Mg(2+).

The catalysed reaction is (2R)-2,3-dihydroxy-3-methylbutanoate = 3-methyl-2-oxobutanoate + H2O. It carries out the reaction (2R,3R)-2,3-dihydroxy-3-methylpentanoate = (S)-3-methyl-2-oxopentanoate + H2O. It functions in the pathway amino-acid biosynthesis; L-isoleucine biosynthesis; L-isoleucine from 2-oxobutanoate: step 3/4. The protein operates within amino-acid biosynthesis; L-valine biosynthesis; L-valine from pyruvate: step 3/4. Its function is as follows. Functions in the biosynthesis of branched-chain amino acids. Catalyzes the dehydration of (2R,3R)-2,3-dihydroxy-3-methylpentanoate (2,3-dihydroxy-3-methylvalerate) into 2-oxo-3-methylpentanoate (2-oxo-3-methylvalerate) and of (2R)-2,3-dihydroxy-3-methylbutanoate (2,3-dihydroxyisovalerate) into 2-oxo-3-methylbutanoate (2-oxoisovalerate), the penultimate precursor to L-isoleucine and L-valine, respectively. This chain is Dihydroxy-acid dehydratase, found in Bacillus cereus (strain 03BB102).